The primary structure comprises 536 residues: Probable tyrosyl-DNA phosphodiesterase (536 aa).

Residue histidine 122 is the Nucleophile of the active site. Residue lysine 124 coordinates substrate. An interaction with DNA region spans residues 315–318 (SMGS). Histidine 401 functions as the Proton donor/acceptor in the catalytic mechanism. Position 403 (lysine 403) interacts with substrate.

This sequence belongs to the tyrosyl-DNA phosphodiesterase family.

It localises to the nucleus. In terms of biological role, DNA repair enzyme that can remove a variety of covalent adducts from DNA through hydrolysis of a 3'-phosphodiester bond, giving rise to DNA with a free 3' phosphate. Catalyzes the hydrolysis of dead-end complexes between DNA and the topoisomerase I active site tyrosine residue. Hydrolyzes 3'-phosphoglycolates on protruding 3' ends on DNA double-strand breaks due to DNA damage by radiation and free radicals. Acts on blunt-ended double-strand DNA breaks and on single-stranded DNA. May have low 3'exonuclease activity and may be able to remove a single nucleoside from the 3'end of DNA and RNA molecules with 3'hydroxyl groups. Has no exonuclease activity towards DNA or RNA with a 3'phosphate. This Schizosaccharomyces pombe (strain 972 / ATCC 24843) (Fission yeast) protein is Probable tyrosyl-DNA phosphodiesterase.